The primary structure comprises 252 residues: Ubiquinone/menaquinone biosynthesis C-methyltransferase UbiE (252 aa).

Residues T71, D100, 124 to 125 (DA), and S141 contribute to the S-adenosyl-L-methionine site.

The protein belongs to the class I-like SAM-binding methyltransferase superfamily. MenG/UbiE family.

It carries out the reaction a 2-demethylmenaquinol + S-adenosyl-L-methionine = a menaquinol + S-adenosyl-L-homocysteine + H(+). It catalyses the reaction a 2-methoxy-6-(all-trans-polyprenyl)benzene-1,4-diol + S-adenosyl-L-methionine = a 5-methoxy-2-methyl-3-(all-trans-polyprenyl)benzene-1,4-diol + S-adenosyl-L-homocysteine + H(+). The protein operates within quinol/quinone metabolism; menaquinone biosynthesis; menaquinol from 1,4-dihydroxy-2-naphthoate: step 2/2. Its pathway is cofactor biosynthesis; ubiquinone biosynthesis. Its function is as follows. Methyltransferase required for the conversion of demethylmenaquinol (DMKH2) to menaquinol (MKH2) and the conversion of 2-polyprenyl-6-methoxy-1,4-benzoquinol (DDMQH2) to 2-polyprenyl-3-methyl-6-methoxy-1,4-benzoquinol (DMQH2). The chain is Ubiquinone/menaquinone biosynthesis C-methyltransferase UbiE from Caulobacter vibrioides (strain ATCC 19089 / CIP 103742 / CB 15) (Caulobacter crescentus).